The chain runs to 240 residues: Small ribosomal subunit protein uS3 (240 aa).

One can recognise a KH type-2 domain in the interval 39 to 109 (IRQYVEKNLS…QIRINVVEVA (71 aa)). Residues 214-240 (EEQAPAQPATTPKRQRRRQQFEDRSNE) are disordered.

It belongs to the universal ribosomal protein uS3 family. In terms of assembly, part of the 30S ribosomal subunit. Forms a tight complex with proteins S10 and S14.

In terms of biological role, binds the lower part of the 30S subunit head. Binds mRNA in the 70S ribosome, positioning it for translation. This Gloeothece citriformis (strain PCC 7424) (Cyanothece sp. (strain PCC 7424)) protein is Small ribosomal subunit protein uS3.